We begin with the raw amino-acid sequence, 926 residues long: Sperm-associated antigen 1 (926 aa).

TPR repeat units lie at residues 209–242 (ATREKEKGNEAFNSGDYEEAVMYYTRSISALPTV), 244–275 (AYNNRAQAEIKLQNWNSAFQDCEKVLELEPGN), and 276–309 (VKALLRRATTYKHQNKLREATEDLSKVLDVEPDN). The disordered stretch occupies residues 318 to 452 (EVERDLKNSE…ENPAGLKSQG (135 aa)). 2 positions are modified to phosphoserine: serine 347 and serine 354. Over residues 352 to 368 (GKSGRKHEDGGGDKKPA) the composition is skewed to basic and acidic residues. Low complexity predominate over residues 369–379 (EPAGAARAAQP). Serine 423 is modified (phosphoserine). Over residues 428-441 (AGGGATGHPGGGQG) the composition is skewed to gly residues. 6 TPR repeats span residues 445–478 (PAGLKSQGNELFRSGQFAEAAGKYSAAIALLEPA), 487–520 (SILYSNRAACYLKEGNCSGCIQDCNRALELHPFS), 522–554 (KPLLRRAMAYETLEQYGKAYVDYKTVLQIDCGL), 623–656 (FKALKEEGNQCVNDKNYKDALSKYSECLKINNKE), 657–690 (CAIYTNRALCYLKLCQFEEAKQDCDQALQLADGN), and 692–724 (KAFYRRALAHKGLKNYQKSLIDLNKVILLDPSI). 2 stretches are compositionally biased toward basic and acidic residues: residues 758 to 769 (IQEVNEGKEEPG) and 784 to 799 (KGGKSSRSPEDPEKLP). Residues 758-801 (IQEVNEGKEEPGRPAGEVSMGCLASEKGGKSSRSPEDPEKLPIA) form a disordered region. 781–788 (ASEKGGKS) contacts GTP. Serine 791 carries the phosphoserine modification.

In terms of tissue distribution, present in most tissues, including lung, with the strongest expression in brain, colon, kidney, and testis. In sperm and testis, detected in particular in pachytene primary spermatocytes. Up-regulated in pancreatic tumor tissues and not in normal pancreatic tissue.

The protein localises to the cytoplasm. It localises to the dynein axonemal particle. May play a role in the cytoplasmic assembly of the ciliary dynein arms. May play a role in fertilization. Binds GTP and has GTPase activity. In Homo sapiens (Human), this protein is Sperm-associated antigen 1 (SPAG1).